The chain runs to 127 residues: Small ribosomal subunit protein uS13 (127 aa).

The disordered stretch occupies residues Pro-97 to Lys-127. A compositionally biased stretch (basic residues) spans Gln-101–Lys-127.

Belongs to the universal ribosomal protein uS13 family. Part of the 30S ribosomal subunit. Forms a loose heterodimer with protein S19. Forms two bridges to the 50S subunit in the 70S ribosome.

Its function is as follows. Located at the top of the head of the 30S subunit, it contacts several helices of the 16S rRNA. In the 70S ribosome it contacts the 23S rRNA (bridge B1a) and protein L5 of the 50S subunit (bridge B1b), connecting the 2 subunits; these bridges are implicated in subunit movement. Contacts the tRNAs in the A and P-sites. This is Small ribosomal subunit protein uS13 from Gloeobacter violaceus (strain ATCC 29082 / PCC 7421).